The primary structure comprises 202 residues: ATP-dependent dethiobiotin synthetase BioD (202 aa).

Residue 12 to 17 (GIGKTI) coordinates ATP. T16 provides a ligand contact to Mg(2+). K32 is a catalytic residue. Residue S36 participates in substrate binding. ATP contacts are provided by residues D43, 94 to 97 (EGAG), and 178 to 180 (PVV). Mg(2+) is bound by residues D43 and E94.

This sequence belongs to the dethiobiotin synthetase family. As to quaternary structure, homodimer. It depends on Mg(2+) as a cofactor.

It is found in the cytoplasm. The enzyme catalyses (7R,8S)-7,8-diammoniononanoate + CO2 + ATP = (4R,5S)-dethiobiotin + ADP + phosphate + 3 H(+). It functions in the pathway cofactor biosynthesis; biotin biosynthesis; biotin from 7,8-diaminononanoate: step 1/2. Catalyzes a mechanistically unusual reaction, the ATP-dependent insertion of CO2 between the N7 and N8 nitrogen atoms of 7,8-diaminopelargonic acid (DAPA, also called 7,8-diammoniononanoate) to form a ureido ring. This Sphingopyxis alaskensis (strain DSM 13593 / LMG 18877 / RB2256) (Sphingomonas alaskensis) protein is ATP-dependent dethiobiotin synthetase BioD.